The sequence spans 389 residues: Sedoheptulose-1,7-bisphosphatase, chloroplastic (389 aa).

A disulfide bridge connects residues Cys115 and Cys120. The Mg(2+) site is built by Asp126, Glu155, Asp173, Leu175, and Asp176. Substrate-binding positions include 176–179, Tyr287, and Lys317; that span reads DGSS. Glu323 contributes to the Mg(2+) binding site.

This sequence belongs to the FBPase class 1 family. In terms of assembly, homodimer. Mg(2+) serves as cofactor.

Its subcellular location is the plastid. It is found in the chloroplast. It catalyses the reaction D-sedoheptulose 1,7-bisphosphate + H2O = D-sedoheptulose 7-phosphate + phosphate. The protein operates within carbohydrate biosynthesis; Calvin cycle. This is Sedoheptulose-1,7-bisphosphatase, chloroplastic (CSBP) from Chlamydomonas reinhardtii (Chlamydomonas smithii).